Consider the following 348-residue polypeptide: NADH-ubiquinone oxidoreductase chain 2 (348 aa).

A run of 10 helical transmembrane segments spans residues 3 to 23 (PTVL…TFIG), 25 to 45 (HWLL…PLMI), 59 to 79 (YFIT…TNAW), 95 to 115 (ATLA…HFWL), 149 to 171 (LNSN…GGLN), 178 to 198 (ILAY…HYSP), 199 to 219 (SLTL…FLLF), 242 to 262 (VIAL…GFMP), 274 to 294 (SLII…FFYL), and 324 to 344 (LILL…PLIL).

This sequence belongs to the complex I subunit 2 family.

The protein localises to the mitochondrion inner membrane. It catalyses the reaction a ubiquinone + NADH + 5 H(+)(in) = a ubiquinol + NAD(+) + 4 H(+)(out). Functionally, core subunit of the mitochondrial membrane respiratory chain NADH dehydrogenase (Complex I) that is believed to belong to the minimal assembly required for catalysis. Complex I functions in the transfer of electrons from NADH to the respiratory chain. The immediate electron acceptor for the enzyme is believed to be ubiquinone. The chain is NADH-ubiquinone oxidoreductase chain 2 (MT-ND2) from Scyliorhinus canicula (Small-spotted catshark).